A 115-amino-acid polypeptide reads, in one-letter code: Large ribosomal subunit protein P2 (115 aa).

Met1 bears the N-acetylmethionine mark. Residues Ser17 and Ser19 each carry the phosphoserine modification. N6-acetyllysine; alternate is present on Lys21. Lys21 is subject to N6-succinyllysine; alternate. Residues 78–90 are compositionally biased toward low complexity; sequence GSAAPAAGSAPAA. The interval 78–115 is disordered; it reads GSAAPAAGSAPAAAEEKKDEKKEESEESDDDMGFGLFD. Ser79 and Ser86 each carry phosphoserine. A compositionally biased stretch (basic and acidic residues) spans 91–101; sequence AEEKKDEKKEE. Residues Ser102 and Ser105 each carry the phosphoserine modification.

The protein belongs to the eukaryotic ribosomal protein P1/P2 family. As to quaternary structure, heterodimer with P1 at the lateral ribosomal stalk of the large ribosomal subunit.

In terms of biological role, plays an important role in the elongation step of protein synthesis. The polypeptide is Large ribosomal subunit protein P2 (RPLP2) (Homo sapiens (Human)).